The primary structure comprises 747 residues: Elongation factor G, mitochondrial (747 aa).

Residues 1 to 16 (MSLIMRVLNGNLSLRL) constitute a mitochondrion transit peptide. The 278-residue stretch at 42–319 (ERIRNIGISA…AIIDYLPNPG (278 aa)) folds into the tr-type G domain. Residues 51-58 (AHIDSGKT), 118-122 (DTPGH), and 172-175 (NKLD) contribute to the GTP site.

The protein belongs to the TRAFAC class translation factor GTPase superfamily. Classic translation factor GTPase family. EF-G/EF-2 subfamily.

Its subcellular location is the mitochondrion. It functions in the pathway protein biosynthesis; polypeptide chain elongation. Mitochondrial GTPase that catalyzes the GTP-dependent ribosomal translocation step during translation elongation. During this step, the ribosome changes from the pre-translocational (PRE) to the post-translocational (POST) state as the newly formed A-site-bound peptidyl-tRNA and P-site-bound deacylated tRNA move to the P and E sites, respectively. Catalyzes the coordinated movement of the two tRNA molecules, the mRNA and conformational changes in the ribosome. Essential during development as it acts as a retrograde signal from mitochondria to the nucleus to slow down cell proliferation if mitochondrial energy output is low. This chain is Elongation factor G, mitochondrial, found in Drosophila grimshawi (Hawaiian fruit fly).